Reading from the N-terminus, the 602-residue chain is Proteasome-associated ATPase (602 aa).

Residues 1–17 show a composition bias toward low complexity; the sequence is MSGPRSGSGSDGSTGRP. The segment at 1-31 is disordered; that stretch reads MSGPRSGSGSDGSTGRPGDAESRRSAYEKET. Basic and acidic residues predominate over residues 18-31; that stretch reads GDAESRRSAYEKET. Positions 19–106 form a coiled coil; the sequence is DAESRRSAYE…LKEEVDRLAQ (88 aa). 289-294 lines the ATP pocket; the sequence is GCGKTL. The segment at 601 to 602 is docks into pockets in the proteasome alpha-ring; sequence YL.

The protein belongs to the AAA ATPase family. Homohexamer. Assembles into a hexameric ring structure that caps the 20S proteasome core. Strongly interacts with the prokaryotic ubiquitin-like protein Pup through a hydrophobic interface; the interacting region of ARC lies in its N-terminal coiled-coil domain. There is one Pup binding site per ARC hexamer ring. Upon ATP-binding, the C-terminus of ARC interacts with the alpha-rings of the proteasome core, possibly by binding to the intersubunit pockets.

The protein operates within protein degradation; proteasomal Pup-dependent pathway. ATPase which is responsible for recognizing, binding, unfolding and translocation of pupylated proteins into the bacterial 20S proteasome core particle. May be essential for opening the gate of the 20S proteasome via an interaction with its C-terminus, thereby allowing substrate entry and access to the site of proteolysis. Thus, the C-termini of the proteasomal ATPase may function like a 'key in a lock' to induce gate opening and therefore regulate proteolysis. The sequence is that of Proteasome-associated ATPase from Frankia casuarinae (strain DSM 45818 / CECT 9043 / HFP020203 / CcI3).